Reading from the N-terminus, the 404-residue chain is Argininosuccinate synthase (404 aa).

Residues 10–18 (AYSGGVDTS) and Ala-38 each bind ATP. Position 89 (Tyr-89) interacts with L-citrulline. ATP is bound at residue Gly-119. Positions 121, 125, and 126 each coordinate L-aspartate. Residue Asn-125 participates in L-citrulline binding. Residues Arg-129, Ser-177, Ser-186, Glu-262, and Tyr-274 each contribute to the L-citrulline site.

It belongs to the argininosuccinate synthase family. Type 1 subfamily. Homotetramer.

The protein resides in the cytoplasm. The catalysed reaction is L-citrulline + L-aspartate + ATP = 2-(N(omega)-L-arginino)succinate + AMP + diphosphate + H(+). Its pathway is amino-acid biosynthesis; L-arginine biosynthesis; L-arginine from L-ornithine and carbamoyl phosphate: step 2/3. The chain is Argininosuccinate synthase from Prochlorococcus marinus (strain MIT 9301).